A 511-amino-acid chain; its full sequence is Adenosine deaminase 2 (511 aa).

An N-terminal signal peptide occupies residues 1 to 29 (MLVDGPSERPALCFLLLAVAMSFFGSALS). The tract at residues 30–100 (IDETRAHLLL…HLIERSQVFN (71 aa)) is dimerization. Zn(2+) contacts are provided by His112 and His114. Asp115 serves as a coordination point for substrate. N-linked (GlcNAc...) asparagine glycosylation is present at Asn127. The segment at 127-185 (NVTYRPHCHICFTPRGIMQFRFAHPTPRPSEKCSKWILLEDYRKRVQNVTEFDDSLLRN) is PRB domain. A disulfide bridge links Cys137 with Cys159. 2 N-linked (GlcNAc...) asparagine glycosylation sites follow: Asn174 and Asn185. Substrate is bound by residues 204 to 211 (WSKFETIF), His293, and Gly326. His356 contributes to the Zn(2+) binding site. Glu359 serves as the catalytic Proton donor. N-linked (GlcNAc...) asparagine glycosylation is present at Asn378. The active-site Proton acceptor is the His384. Asp441 provides a ligand contact to Zn(2+). Residue Asp442 coordinates substrate.

This sequence belongs to the metallo-dependent hydrolases superfamily. Adenosine and AMP deaminases family. ADGF subfamily. Homodimer. Interacts with adenosine receptors. Binds heparin. It depends on Zn(2+) as a cofactor. Detected in blood plasma (at protein level). Widely expressed, with most abundant expression in human adult heart, lung, lymphoblasts, and placenta as well as fetal lung, liver, and kidney. In embryo, expressed in the outflow tract and atrium of the developing heart, the VII/VIII cranial nerve ganglion, and the notochord.

The protein localises to the secreted. It catalyses the reaction adenosine + H2O + H(+) = inosine + NH4(+). Its function is as follows. Adenosine deaminase that may contribute to the degradation of extracellular adenosine, a signaling molecule that controls a variety of cellular responses. Requires elevated adenosine levels for optimal enzyme activity. Binds to cell surfaces via proteoglycans and may play a role in the regulation of cell proliferation and differentiation, independently of its enzyme activity. The chain is Adenosine deaminase 2 from Homo sapiens (Human).